The following is a 334-amino-acid chain: Ribosomal RNA small subunit methyltransferase C (334 aa).

This sequence belongs to the methyltransferase superfamily. RsmC family. As to quaternary structure, monomer.

The protein localises to the cytoplasm. The catalysed reaction is guanosine(1207) in 16S rRNA + S-adenosyl-L-methionine = N(2)-methylguanosine(1207) in 16S rRNA + S-adenosyl-L-homocysteine + H(+). Specifically methylates the guanine in position 1207 of 16S rRNA in the 30S particle. The chain is Ribosomal RNA small subunit methyltransferase C from Idiomarina loihiensis (strain ATCC BAA-735 / DSM 15497 / L2-TR).